Reading from the N-terminus, the 222-residue chain is dTTP/UTP pyrophosphatase (222 aa).

Catalysis depends on Asp83, which acts as the Proton acceptor.

The protein belongs to the Maf family. YhdE subfamily. It depends on a divalent metal cation as a cofactor.

Its subcellular location is the cytoplasm. The catalysed reaction is dTTP + H2O = dTMP + diphosphate + H(+). It carries out the reaction UTP + H2O = UMP + diphosphate + H(+). Functionally, nucleoside triphosphate pyrophosphatase that hydrolyzes dTTP and UTP. May have a dual role in cell division arrest and in preventing the incorporation of modified nucleotides into cellular nucleic acids. In Desulfitobacterium hafniense (strain Y51), this protein is dTTP/UTP pyrophosphatase.